The primary structure comprises 203 residues: MAEGDNRSSNLLAAETASLEEQLQGWGEVMLMADKVLRWERAWFPPAIMGVVSLVFLIIYYLDPSVLSGVSCFVMFLCLADYLVPILAPRIFGSNKWTTEQQQRFHEICSNLVKTRRRAVGWWKRLFTLKEEKPKMYFMTMIVSLAAVAWVGQQVHNLLLTYLIVTSLLLLPGLNQHGIISKYIGMAKREINKLLKQKEKKNE.

At 1–41 the chain is on the cytoplasmic side; it reads MAEGDNRSSNLLAAETASLEEQLQGWGEVMLMADKVLRWER. Residues 42–62 form a helical membrane-spanning segment; that stretch reads AWFPPAIMGVVSLVFLIIYYL. Residues 63 to 65 are Lumenal-facing; the sequence is DPS. The chain crosses the membrane as a helical span at residues 66–86; that stretch reads VLSGVSCFVMFLCLADYLVPI. Residues 87 to 133 lie on the Cytoplasmic side of the membrane; it reads LAPRIFGSNKWTTEQQQRFHEICSNLVKTRRRAVGWWKRLFTLKEEK. The helical transmembrane segment at 134 to 175 threads the bilayer; the sequence is PKMYFMTMIVSLAAVAWVGQQVHNLLLTYLIVTSLLLLPGLN. The Lumenal portion of the chain corresponds to 176-203; it reads QHGIISKYIGMAKREINKLLKQKEKKNE.

The protein belongs to the ARL6ip family. As to quaternary structure, homooligomer. Heterodimer with ARL6IP5. Interacts with ATL1, TMEM33 and ARL6.

The protein resides in the endomembrane system. It is found in the endoplasmic reticulum membrane. Its subcellular location is the endoplasmic reticulum. Its function is as follows. Positively regulates SLC1A1/EAAC1-mediated glutamate transport by increasing its affinity for glutamate in a PKC activity-dependent manner. Promotes the catalytic efficiency of SLC1A1/EAAC1 probably by reducing its interaction with ARL6IP5, a negative regulator of SLC1A1/EAAC1-mediated glutamate transport. Plays a role in the formation and stabilization of endoplasmic reticulum tubules. Negatively regulates apoptosis, possibly by modulating the activity of caspase-9 (CASP9). Inhibits cleavage of CASP9-dependent substrates and downstream markers of apoptosis but not CASP9 itself. May be involved in protein transport, membrane trafficking, or cell signaling during hematopoietic maturation. In Pongo abelii (Sumatran orangutan), this protein is ADP-ribosylation factor-like protein 6-interacting protein 1 (ARL6IP1).